The chain runs to 368 residues: tRNA-specific 2-thiouridylase MnmA (368 aa).

ATP-binding positions include 12 to 19 (GMSGGVDS) and M38. Positions 98-100 (NPD) are interaction with target base in tRNA. C103 serves as the catalytic Nucleophile. C103 and C200 are oxidised to a cystine. G128 provides a ligand contact to ATP. Positions 150 to 152 (KDQ) are interaction with tRNA. The Cysteine persulfide intermediate role is filled by C200. The interval 311-312 (RY) is interaction with tRNA.

The protein belongs to the MnmA/TRMU family.

The protein resides in the cytoplasm. The catalysed reaction is S-sulfanyl-L-cysteinyl-[protein] + uridine(34) in tRNA + AH2 + ATP = 2-thiouridine(34) in tRNA + L-cysteinyl-[protein] + A + AMP + diphosphate + H(+). Catalyzes the 2-thiolation of uridine at the wobble position (U34) of tRNA, leading to the formation of s(2)U34. The polypeptide is tRNA-specific 2-thiouridylase MnmA (Aeromonas salmonicida (strain A449)).